The primary structure comprises 304 residues: MTKVRKAIIPAAGLGTRFLPATKALAKEMLPIVDKPTIQFIVEEALKSGIEEILVVTGKAKRSIEDHFDSNFELEYNLQAKGKNELLKLVDETTAINLHFIRQSHPRGLGDAVLQAKAFVGNEPFVVMLGDDLMDITNASAKPLTKQLMEDYDKTHASTIAVMKVPHEDVSSYGVIAPQGKAVKGLYSVDTFVEKPQPEDAPSDLAIIGRYLLTPEIFDILERQVPGAGNEVQLTDAIDTLNKTQRVFAREFKGNRYDVGDKFGFMKTSIDYALEHPQVKEDLKNYIIKLGKALEKSKVPTHSK.

Belongs to the UDPGP type 2 family.

The catalysed reaction is alpha-D-glucose 1-phosphate + UTP + H(+) = UDP-alpha-D-glucose + diphosphate. It functions in the pathway carbohydrate metabolism; nucleotide-sugar metabolism. The chain is UTP--glucose-1-phosphate uridylyltransferase 1 (hasC1) from Streptococcus pyogenes serotype M3 (strain ATCC BAA-595 / MGAS315).